A 376-amino-acid chain; its full sequence is Beta-centractin (376 aa).

Met-1 is subject to N-acetylmethionine. Tyr-4 carries the 3'-nitrotyrosine modification.

It belongs to the actin family. ARP1 subfamily.

It localises to the cytoplasm. The protein localises to the cytoskeleton. It is found in the microtubule organizing center. Its subcellular location is the centrosome. In terms of biological role, component of a multi-subunit complex involved in microtubule based vesicle motility. It is associated with the centrosome. The chain is Beta-centractin (ACTR1B) from Bos taurus (Bovine).